The following is a 507-amino-acid chain: Protein O-glucosyltransferase 3 (507 aa).

An N-terminal signal peptide occupies residues 1-20 (MRRLPRALLLQLRLALLVAA). A Filamin repeat occupies 24-134 (EVLVSAPRSL…VAQSPYILKG (111 aa)). N-linked (GlcNAc...) asparagine glycans are attached at residues Asn-61 and Asn-306. Residues 504-507 (REEL) carry the Prevents secretion from ER motif.

The protein belongs to the KDELC family.

The protein localises to the endoplasmic reticulum lumen. The enzyme catalyses L-seryl-[EGF-like domain protein] + UDP-alpha-D-glucose = 3-O-(beta-D-glucosyl)-L-seryl-[EGF-like domain protein] + UDP + H(+). The catalysed reaction is L-seryl-[EGF-like domain protein] + UDP-alpha-D-xylose = 3-O-(beta-D-xylosyl)-L-seryl-[EGF-like domain protein] + UDP + H(+). The protein operates within protein modification; protein glycosylation. In terms of biological role, protein glucosyltransferase that catalyzes the transfer of glucose from UDP-glucose to a serine residue within the consensus sequence peptide C-X-N-T-X-G-S-F-X-C. Can also catalyze the transfer of xylose from UDP-xylose but less efficiently. Specifically targets extracellular EGF repeats of proteins such as NOTCH1, NOTCH3, FBN1, FBN2 and LTBP1. May regulate the transport of NOTCH1 and NOTCH3 to the plasma membrane and thereby the Notch signaling pathway. This chain is Protein O-glucosyltransferase 3, found in Homo sapiens (Human).